A 78-amino-acid chain; its full sequence is Probable Vpr-like protein (78 aa).

A Nuclear export signal motif is present at residues 35-43 (AIRLLQGLF). Positions 45-54 (RYRFKKPRVD) match the Nuclear localization signal motif.

It is found in the virion. Its subcellular location is the host nucleus. Its function is as follows. Seems to function as a Vpr-like protein, since it mediates host cell cycle arrest in G2 phase. Cell cycle arrest creates a favorable environment for maximizing viral expression and production. The chain is Probable Vpr-like protein from Feline immunodeficiency virus (isolate Petaluma) (FIV).